We begin with the raw amino-acid sequence, 235 residues long: 5'-methylthioadenosine/S-adenosylhomocysteine nucleosidase (235 aa).

Glu-12 acts as the Proton acceptor in catalysis. Residues Gly-78, Met-153, and 174–175 (ME) contribute to the substrate site. The Proton donor role is filled by Asp-198.

This sequence belongs to the PNP/UDP phosphorylase family. MtnN subfamily.

The enzyme catalyses S-adenosyl-L-homocysteine + H2O = S-(5-deoxy-D-ribos-5-yl)-L-homocysteine + adenine. It catalyses the reaction S-methyl-5'-thioadenosine + H2O = 5-(methylsulfanyl)-D-ribose + adenine. The catalysed reaction is 5'-deoxyadenosine + H2O = 5-deoxy-D-ribose + adenine. It functions in the pathway amino-acid biosynthesis; L-methionine biosynthesis via salvage pathway; S-methyl-5-thio-alpha-D-ribose 1-phosphate from S-methyl-5'-thioadenosine (hydrolase route): step 1/2. Functionally, catalyzes the irreversible cleavage of the glycosidic bond in both 5'-methylthioadenosine (MTA) and S-adenosylhomocysteine (SAH/AdoHcy) to adenine and the corresponding thioribose, 5'-methylthioribose and S-ribosylhomocysteine, respectively. Also cleaves 5'-deoxyadenosine, a toxic by-product of radical S-adenosylmethionine (SAM) enzymes, into 5-deoxyribose and adenine. The sequence is that of 5'-methylthioadenosine/S-adenosylhomocysteine nucleosidase from Geobacillus kaustophilus (strain HTA426).